Here is a 215-residue protein sequence, read N- to C-terminus: Protein Syd (215 aa).

This sequence belongs to the Syd family.

It localises to the cell inner membrane. Its function is as follows. Interacts with the SecY protein in vivo. May bind preferentially to an uncomplexed state of SecY, thus functioning either as a chelating agent for excess SecY in the cell or as a regulatory factor that negatively controls the translocase function. The chain is Protein Syd from Shewanella amazonensis (strain ATCC BAA-1098 / SB2B).